The sequence spans 1663 residues: Cortactin-binding protein 2 (1663 aa).

Positions 1–26 are disordered; the sequence is MATDGASCEPDLSRAPEDAAGATAEA. Residues 119-275 adopt a coiled-coil conformation; the sequence is RKMQERMSAQ…IEQLKKGGDS (157 aa). Disordered stretches follow at residues 355-440 and 454-478; these read SIDR…LHPG and GNAN…SPTS. A compositionally biased stretch (low complexity) spans 386–403; that stretch reads PSTDSTPDPTSSTPLLSS. The segment covering 404-422 has biased composition (polar residues); that stretch reads NAAPPTAQTPGITPQNSQA. Arginine 498 carries the asymmetric dimethylarginine modification. The segment at 499–614 is disordered; sequence FTGPQAGAPP…KSSSPQLPPK (116 aa). Over residues 583–593 the composition is skewed to polar residues; that stretch reads TVASPPSSLPQ. ANK repeat units follow at residues 709–739, 743–772, 776–805, 809–838, and 842–871; these read GRPT…DINY, DGHS…QVNA, NGFT…NINH, GGQT…DRCV, and DGWT…PAHG. Positions 872-897 are disordered; it reads NSFSEEESESGVFDLDGEEESPEGKS. A compositionally biased stretch (acidic residues) spans 875–892; the sequence is SEEESESGVFDLDGEEES. Residues 912-942 form an ANK 6 repeat; the sequence is EGWTAAHIAAAKGFKNCLEILCRHGGLEPER. Positions 1446 to 1482 are disordered; it reads SKKKGESGAWRKVNTSPRRKSGRFSLPTWNKPDLSTE. At serine 1524 the chain carries Phosphoserine. Positions 1617–1663 are disordered; it reads RSKVTQCSQNTKSSSSSSNTRQIEINNNSKEENWNLHKNEHLEKANK. 2 stretches are compositionally biased toward polar residues: residues 1619 to 1628 and 1635 to 1644; these read KVTQCSQNTK and NTRQIEINNN. Basic and acidic residues predominate over residues 1645-1663; that stretch reads SKEENWNLHKNEHLEKANK.

Interacts with CTTN/cortactin SH3 domain. Interacts with STRN, STRN4/zinedin and MOB4/phocein; this interactions mediate the association with the STRIPAK core complex and may regulate dendritic spine distribution of the STRIPAK complex in hippocampal neurons. Activation of glutamate receptors weakens the interaction with STRN and STRN4.

The protein localises to the cytoplasm. It localises to the cell cortex. It is found in the cell projection. Its subcellular location is the dendritic spine. Regulates the dendritic spine distribution of CTTN/cortactin in hippocampal neurons, and thus controls dendritic spinogenesis and dendritic spine maintenance. Associates with the striatin-interacting phosphatase and kinase (STRIPAK) core complex to regulate dendritic spine distribution of the STRIPAK complex in hippocampal neurons. The protein is Cortactin-binding protein 2 (CTTNBP2) of Plecturocebus moloch (Dusky titi monkey).